Consider the following 236-residue polypeptide: Putative glutamine amidotransferase-like protein YvdE (236 aa).

The 220-residue stretch at 17-236 (SPFWWNKVSY…IFEIFANGTI (220 aa)) folds into the Glutamine amidotransferase type-1 domain.

The polypeptide is Putative glutamine amidotransferase-like protein YvdE (yvdE) (Lactococcus lactis subsp. lactis (strain IL1403) (Streptococcus lactis)).